Consider the following 521-residue polypeptide: Cytochrome P450 1A1 (521 aa).

Phenylalanine 229 is a substrate binding site. Residue cysteine 463 coordinates heme.

This sequence belongs to the cytochrome P450 family. Requires heme as cofactor.

The protein resides in the endoplasmic reticulum membrane. It is found in the microsome membrane. It catalyses the reaction an organic molecule + reduced [NADPH--hemoprotein reductase] + O2 = an alcohol + oxidized [NADPH--hemoprotein reductase] + H2O + H(+). Its function is as follows. Cytochromes P450 are a group of heme-thiolate monooxygenases. They oxidize a variety of structurally unrelated compounds, including steroids, fatty acids, and xenobiotics. The chain is Cytochrome P450 1A1 (cyp1a1) from Pleuronectes platessa (European plaice).